Consider the following 310-residue polypeptide: D-apiose import binding protein (310 aa).

The signal sequence occupies residues 1–21 (MKLLKASLVALSLAASTFVYA). Residues Asn35, 111-112 (DR), 158-160 (DTN), Arg164, Asn214, Asp239, and Gln260 contribute to the D-apiofuranose site.

This sequence belongs to the bacterial solute-binding protein 2 family.

It localises to the periplasm. In terms of biological role, part of an ABC transporter complex involved in D-apiose import. Binds D-apiose, D-ribose and D-ribulose. This chain is D-apiose import binding protein, found in Actinobacillus succinogenes (strain ATCC 55618 / DSM 22257 / CCUG 43843 / 130Z).